A 675-amino-acid chain; its full sequence is Vacuolar protein sorting-associated protein 5 (675 aa).

3 disordered regions span residues 1 to 26 (MDYE…QSLV), 65 to 84 (EWKD…EHDN), and 165 to 219 (RAQR…RREN). The span at 168–180 (RNSKRNHSLKAKR) shows a compositional bias: basic residues. Residues 195 to 204 (PLKKAEKENE) are compositionally biased toward basic and acidic residues. One can recognise a PX domain in the interval 279-394 (VAFKVEVKDP…LFLTSDDFSS (116 aa)). Residues R320, K346, and R360 each coordinate a 1,2-diacyl-sn-glycero-3-phospho-(1D-myo-inositol-3-phosphate).

This sequence belongs to the sorting nexin family. In terms of assembly, component of the retromer complex which consists of VPS29, VPS26, VPS35, VPS5 and VPS17. Component of a retromer subcomplex consisting of VPSD5 and VPS17. In terms of processing, phosphorylated on serine residue(s).

It localises to the cytoplasm. The protein localises to the golgi apparatus membrane. The protein resides in the endosome membrane. Plays a role in vesicular protein sorting. Required for retention of late Golgi membrane proteins and vacuolar biogenesis. Component of the membrane-associated retromer complex which is essential in endosome-to-Golgi retrograde transport. The VPS5-VPS17 subcomplex may assemble onto the membrane to promote vesicle formation. This chain is Vacuolar protein sorting-associated protein 5 (VPS5), found in Saccharomyces cerevisiae (strain ATCC 204508 / S288c) (Baker's yeast).